Reading from the N-terminus, the 397-residue chain is Aurora kinase A (397 aa).

The tract at residues 1–118 is disordered; the sequence is MDRCKENCVS…SIQKTEDSKK (118 aa). Polar residues-rich tracts occupy residues 29–55 and 84–102; these read QIPS…SQRV and RLSN…SGNN. A phosphoserine mark is found at Ser40 and Ser50. A compositionally biased stretch (basic and acidic residues) spans 103 to 118; the sequence is SEKEQTSIQKTEDSKK. Residues 126–376 enclose the Protein kinase domain; that stretch reads FDIGRPLGKG…LAEVLEHPWI (251 aa). ATP-binding positions include Lys136, Lys155, and 203 to 206; that span reads LEYA. Asp249 (proton acceptor) is an active-site residue. A Glycyl lysine isopeptide (Lys-Gly) (interchain with G-Cter in SUMO2) cross-link involves residue Lys251. ATP contacts are provided by residues 253–254 and Asp267; that span reads EN. Positions 273–286 are activation segment; it reads HAPSSRRTTLCGTL. A phosphothreonine mark is found at Thr280 and Thr281. Position 335 is a phosphoserine; by PKA and PAK (Ser335). Polar residues predominate over residues 378 to 387; sequence ANSSKPPTGH. The segment at 378 to 397 is disordered; the sequence is ANSSKPPTGHNSKEATSKSS. The span at 388-397 shows a compositional bias: basic and acidic residues; the sequence is NSKEATSKSS.

This sequence belongs to the protein kinase superfamily. Ser/Thr protein kinase family. Aurora subfamily. Part of a complex composed of NEDD9, AURKA and CTTN; within the complex NEDD9 acts as a scaffold protein and is required for complex formation. Identified in a complex with AUNIP and NIN. Interacts with CPEB1, JTB, TACC1, TPX2, PPP2CA, as well as with the protein phosphatase type 1 (PP1) isoforms PPP1CA, PPP1CB and PPP1CC. Also interacts with its substrates ARHGEF2, BORA, KIF2A, PARD3, and p53/TP53. Interaction with BORA promotes phosphorylation of PLK1. Interacts with FBXL7 and CIMAP3. Interacts with GADD45A, competing with its oligomerization. Interacts (via C-terminus) with AUNIP (via C-terminus). Interacts with SIRT2. Interacts with FRY; this interaction facilitates AURKA-mediated PLK1 phosphorylation. Interacts with MYCN; interaction is phospho-independent and triggers AURKA activation; AURKA competes with FBXW7 for binding to unphosphorylated MYCN but not for binding to phosphorylated MYCN. Interacts with HNRNPU. Interacts with AAAS. Interacts with KLHL18 and CUL3. Interacts with FOXP1. Interacts with HDAC6; AURKA-mediated phosphorylation of HDAC6 promotes deacetylation of alpha-tubulin. In terms of processing, activated by phosphorylation at Thr-281; this brings about a change in the conformation of the activation segment. Phosphorylation at Thr-281 varies during the cell cycle and is highest during M phase. Autophosphorylated at Thr-281 upon TPX2 binding. Thr-281 can be phosphorylated by several kinases, including PAK and PKA. Protein phosphatase type 1 (PP1) binds AURKA and inhibits its activity by dephosphorylating Thr-281 during mitosis. Phosphorylation at Ser-335 decreases the kinase activity. PPP2CA controls degradation by dephosphorylating Ser-52 at the end of mitosis. Phosphorylated in embryonic brain neurons. Post-translationally, ubiquitinated by CHFR, leading to its degradation by the proteasome. Ubiquitinated by the anaphase-promoting complex (APC), leading to its degradation by the proteasome. Ubiquitinated by the E3 ubiquitin-protein ligase complex SCF(FBXL7) during mitosis, leading to its degradation by the proteasome. Ubiquitinated by the CUL3-KLHL18 ligase leading to its activation at the centrosome which is required for initiating mitotic entry. Ubiquitination mediated by CUL3-KLHL18 ligase does not lead to its degradation by the proteasome. In terms of tissue distribution, detected in neurons in brain cortex and hippocampus (at protein level). Expressed in mammary gland and tumor.

It localises to the cytoplasm. The protein localises to the cytoskeleton. The protein resides in the microtubule organizing center. Its subcellular location is the centrosome. It is found in the spindle pole. It localises to the centriole. The protein localises to the cell projection. The protein resides in the neuron projection. Its subcellular location is the cilium. It is found in the cilium basal body. It localises to the basolateral cell membrane. The catalysed reaction is L-seryl-[protein] + ATP = O-phospho-L-seryl-[protein] + ADP + H(+). It carries out the reaction L-threonyl-[protein] + ATP = O-phospho-L-threonyl-[protein] + ADP + H(+). Its activity is regulated as follows. Activation of CDK1, appears to be an upstream event of AURKA activation. Phosphatase inhibitor-2 (PPP1R2) and TPX2 act also as activators. Inactivated by the G2 checkpoint. Inhibited by GADD45A and p53/TP53, and through dephosphorylation by protein phosphatase type 1 (PP1). MLN8054 is also a potent and selective inhibitor. Activated during the early phase of cilia disassembly in the presence of FBXL7 and CIMAP3. Inhibited by the small molecule inhibitor VX-680. Its function is as follows. Mitotic serine/threonine kinase that contributes to the regulation of cell cycle progression. Associates with the centrosome and the spindle microtubules during mitosis and plays a critical role in various mitotic events including the establishment of mitotic spindle, centrosome duplication, centrosome separation as well as maturation, chromosomal alignment, spindle assembly checkpoint, and cytokinesis. Required for normal spindle positioning during mitosis and for the localization of NUMA1 and DCTN1 to the cell cortex during metaphase. Required for initial activation of CDK1 at centrosomes. Phosphorylates numerous target proteins, including ARHGEF2, BORA, BRCA1, CDC25B, DLGP5, HDAC6, KIF2A, LATS2, NDEL1, PARD3, PPP1R2, PLK1, RASSF1, TACC3, p53/TP53 and TPX2. Phosphorylates MCRS1 which is required for MCRS1-mediated kinetochore fiber assembly and mitotic progression. Regulates KIF2A tubulin depolymerase activity. Required for normal axon formation. Plays a role in microtubule remodeling during neurite extension. Important for microtubule formation and/or stabilization. Also acts as a key regulatory component of the p53/TP53 pathway, and particularly the checkpoint-response pathways critical for oncogenic transformation of cells, by phosphorylating and stabilizating p53/TP53. Phosphorylates its own inhibitors, the protein phosphatase type 1 (PP1) isoforms, to inhibit their activity. Inhibits cilia outgrowth. Required for cilia disassembly via phosphorylation of HDAC6 and subsequent deacetylation of alpha-tubulin. Regulates protein levels of the anti-apoptosis protein BIRC5 by suppressing the expression of the SCF(FBXL7) E3 ubiquitin-protein ligase substrate adapter FBXL7 through the phosphorylation of the transcription factor FOXP1. In Rattus norvegicus (Rat), this protein is Aurora kinase A.